The primary structure comprises 322 residues: Lipoyl synthase (322 aa).

Residues C68, C73, C79, C94, C98, C101, and S309 each coordinate [4Fe-4S] cluster. The Radical SAM core domain occupies 80–298 (FNHGTASFMI…RVAGVEMGFS (219 aa)).

The protein belongs to the radical SAM superfamily. Lipoyl synthase family. Requires [4Fe-4S] cluster as cofactor.

It is found in the cytoplasm. It carries out the reaction [[Fe-S] cluster scaffold protein carrying a second [4Fe-4S](2+) cluster] + N(6)-octanoyl-L-lysyl-[protein] + 2 oxidized [2Fe-2S]-[ferredoxin] + 2 S-adenosyl-L-methionine + 4 H(+) = [[Fe-S] cluster scaffold protein] + N(6)-[(R)-dihydrolipoyl]-L-lysyl-[protein] + 4 Fe(3+) + 2 hydrogen sulfide + 2 5'-deoxyadenosine + 2 L-methionine + 2 reduced [2Fe-2S]-[ferredoxin]. Its pathway is protein modification; protein lipoylation via endogenous pathway; protein N(6)-(lipoyl)lysine from octanoyl-[acyl-carrier-protein]: step 2/2. Functionally, catalyzes the radical-mediated insertion of two sulfur atoms into the C-6 and C-8 positions of the octanoyl moiety bound to the lipoyl domains of lipoate-dependent enzymes, thereby converting the octanoylated domains into lipoylated derivatives. The sequence is that of Lipoyl synthase from Idiomarina loihiensis (strain ATCC BAA-735 / DSM 15497 / L2-TR).